We begin with the raw amino-acid sequence, 642 residues long: Kinesin-2b (642 aa).

Residues Asn-12–Ile-344 form the Kinesin motor domain. Gly-107–Thr-114 is an ATP binding site. ADP-binding residues include Gly-110, Gly-112, Lys-113, and Thr-114. Position 114 (Thr-114) interacts with Mg(2+). The stretch at Val-415 to Met-475 forms a coiled coil.

It belongs to the TRAFAC class myosin-kinesin ATPase superfamily. Kinesin family. Kinesin II subfamily.

It localises to the cell projection. The protein resides in the cilium. It is found in the flagellum. Its subcellular location is the cytoplasm. The protein localises to the cytoskeleton. It localises to the flagellum axoneme. The protein resides in the flagellum basal body. Its function is as follows. Involved in anterograde intraflagellar transport (IFT). Involved in flagellar assembly. The protein is Kinesin-2b of Giardia intestinalis (strain ATCC 50803 / WB clone C6) (Giardia lamblia).